A 395-amino-acid polypeptide reads, in one-letter code: MSVQPTPADHFTFGLWTVGWTGADPFGVATRKNLDPVEAVHKLAELGAYGITFHDNDLIPFDATEAEREKILGDFNQALKDTGLKVPMVTTNLFSHPVFKDGGFTSNDRSIRRFALAKVLHNIDLAAEMGAETFVMWGGREGSEYDGSKDLAAALDRMREGVDTAAGYIKDKGYNLRIALEPKPNEPRGDIFLPTVGHGLAFIEQLEHGDIVGLNPETGHEQMAGLNFTHGIAQALWAEKLFHIDLNGQRGIKYDQDLVFGHGDLTSAFFTVDLLENGFPNGGPKYTGPRHFDYKPSRTDGYDGVWDSAKANMSMYLLLKERALAFRADPEVQEAMKTSGVFELGETTLNAGESAADLMNDSASFAGFDAEAAAERNFAFIRLNQLAIEHLLGSR.

Residues H54 and D57 contribute to the active site. Mg(2+) contacts are provided by E181, E217, H220, D245, D255, D257, and D293.

Belongs to the xylose isomerase family. As to quaternary structure, homotetramer. Mg(2+) is required as a cofactor.

The protein resides in the cytoplasm. It catalyses the reaction alpha-D-xylose = alpha-D-xylulofuranose. This Arthrobacter sp. (strain NRRL B3728) protein is Xylose isomerase (xylA).